A 320-amino-acid chain; its full sequence is MPSQLEALRRHTVVVADTGDFEAMRALRPTDATTNPSLILKAVQQEAYRPLLVQTARAHQGASPAEITDRLLVAFGRQILDIVPGRVSTEVDARLSFDTRATVERARGLIALYQAAGVPRERVLIKIASTWEGIQAARVLQAEGIRCNLTLLFCLPQAAACADAGVQLISPFVGRIYDWHKKNAGAEWVEDARRGANDPGVQSVSRIYRYYKRFGIETEIMGASFRNVDQILALAGCDLLTISPELLTRLAQTEGEVPAALSPQAGHDDADAVRLDGGEVAFRTQLNEDAMASEKLSEGIRLFVADARKLDALIESHGAA.

Lys126 functions as the Schiff-base intermediate with substrate in the catalytic mechanism.

It belongs to the transaldolase family. Type 1 subfamily. As to quaternary structure, homodimer.

The protein localises to the cytoplasm. It carries out the reaction D-sedoheptulose 7-phosphate + D-glyceraldehyde 3-phosphate = D-erythrose 4-phosphate + beta-D-fructose 6-phosphate. The protein operates within carbohydrate degradation; pentose phosphate pathway; D-glyceraldehyde 3-phosphate and beta-D-fructose 6-phosphate from D-ribose 5-phosphate and D-xylulose 5-phosphate (non-oxidative stage): step 2/3. Transaldolase is important for the balance of metabolites in the pentose-phosphate pathway. This is Transaldolase from Bordetella pertussis (strain Tohama I / ATCC BAA-589 / NCTC 13251).